A 311-amino-acid chain; its full sequence is GPN-loop GTPase 2 (311 aa).

20 to 25 contributes to the GTP binding site; that stretch reads GSGKTT. A Gly-Pro-Asn (GPN)-loop; involved in dimer interface motif is present at residues 77–79; it reads GPN. 179–182 is a GTP binding site; sequence SKMD.

The protein belongs to the GPN-loop GTPase family. Heterodimers with gpn1 or gpn3. Binds to RNA polymerase II (RNAPII).

In terms of biological role, small GTPase required for proper localization of RNA polymerase II and III (RNAPII and RNAPIII). May act at an RNAP assembly step prior to nuclear import. This chain is GPN-loop GTPase 2, found in Danio rerio (Zebrafish).